We begin with the raw amino-acid sequence, 804 residues long: Probable basic-leucine zipper transcription factor C (804 aa).

Disordered stretches follow at residues 86–148 (FISP…NDIN) and 275–371 (YGNV…PKKR). Residues 90-145 (NNNNNNNNNNNNNNNNNNNNNNNNNNNNNNNNNNNNNNNNNNNNNNNNNNNNNNNN) show a composition bias toward low complexity. Polar residues predominate over residues 275–291 (YGNVSDNSSPETNFSYA). Over residues 292–334 (SPSSPSSTQSQSSPYEQQPLSPNPTISLSSSISVTATTTTRPN) the composition is skewed to low complexity. Positions 335–356 (ATEKTKESSLKSKSKSNEKDKE) are enriched in basic and acidic residues. Residues 415-478 (ALNYQFRKIK…DQYKLQEKQK (64 aa)) enclose the bZIP domain. The basic motif stretch occupies residues 421-436 (RKIKNRESARRSRERK). Positions 443-450 (LEAKIAEI) are leucine-zipper. The tract at residues 670-693 (KNCNNNNENNNNNDNNKNSDDEKG) is disordered. Low complexity predominate over residues 672-685 (CNNNNENNNNNDNN).

It belongs to the bZIP family.

The protein resides in the nucleus. Functionally, probable transcriptional regulator. The protein is Probable basic-leucine zipper transcription factor C (bzpC) of Dictyostelium discoideum (Social amoeba).